Consider the following 632-residue polypeptide: Chaperone protein HtpG (632 aa).

Residues methionine 1 to arginine 339 form an a; substrate-binding region. Positions glutamate 340–arginine 559 are b. The tract at residues methionine 560–alanine 632 is c.

The protein belongs to the heat shock protein 90 family. In terms of assembly, homodimer.

Its subcellular location is the cytoplasm. In terms of biological role, molecular chaperone. Has ATPase activity. The polypeptide is Chaperone protein HtpG (Burkholderia cenocepacia (strain HI2424)).